Consider the following 94-residue polypeptide: Small ribosomal subunit protein uS17 (94 aa).

Residues 1 to 22 (MASSSTEGQAAARGRKKSWTGK) are disordered.

The protein belongs to the universal ribosomal protein uS17 family. As to quaternary structure, part of the 30S ribosomal subunit.

Its function is as follows. One of the primary rRNA binding proteins, it binds specifically to the 5'-end of 16S ribosomal RNA. This chain is Small ribosomal subunit protein uS17, found in Chlorobium luteolum (strain DSM 273 / BCRC 81028 / 2530) (Pelodictyon luteolum).